Here is a 539-residue protein sequence, read N- to C-terminus: Acid-sensing ion channel 4-A (539 aa).

Over 1-68 (MPIEFVCKIK…SGRLGVRQTL (68 aa)) the chain is Cytoplasmic. The chain crosses the membrane as a helical span at residues 69–89 (WALAFLVSLALFLYQAAKCAI). The Extracellular segment spans residues 90–432 (SYLEHPHVTA…EQKKAYDVAG (343 aa)). 2 disulfides stabilise this stretch: cysteine 116–cysteine 200 and cysteine 178–cysteine 185. N-linked (GlcNAc...) asparagine glycosylation is found at asparagine 136, asparagine 165, asparagine 179, asparagine 184, asparagine 206, and asparagine 241. Disulfide bonds link cysteine 294/cysteine 369, cysteine 313/cysteine 365, cysteine 317/cysteine 363, cysteine 326/cysteine 347, and cysteine 328/cysteine 340. An N-linked (GlcNAc...) asparagine glycan is attached at asparagine 370. Residues 433–453 (LLGDIGGQMGLFIGASVLTIL) traverse the membrane as a helical segment. The short motif at 446–448 (GAS) is the GAS motif; ion selectivity filter element. The Cytoplasmic segment spans residues 454-539 (EILDYVYEVI…HHRVSEDFAC (86 aa)). The disordered stretch occupies residues 474–494 (QRDDKKQTQQQQQASTVATVN).

It belongs to the amiloride-sensitive sodium channel (TC 1.A.6) family. ASIC4 subfamily. Homotrimer. Heterotrimer; with other ASIC proteins producing functional channels. Expressed in central nervous system.

The protein localises to the cell membrane. The catalysed reaction is Na(+)(in) = Na(+)(out). Inhibited by the diuretic drug amiloride. Functionally, could form pH-gated trimeric sodium channels and function as a postsynaptic excitatory receptors in the nervous system. The polypeptide is Acid-sensing ion channel 4-A (Danio rerio (Zebrafish)).